The primary structure comprises 130 residues: Small ribosomal subunit protein uS8 (130 aa).

The protein belongs to the universal ribosomal protein uS8 family. As to quaternary structure, part of the 30S ribosomal subunit. Contacts proteins S5 and S12.

In terms of biological role, one of the primary rRNA binding proteins, it binds directly to 16S rRNA central domain where it helps coordinate assembly of the platform of the 30S subunit. The sequence is that of Small ribosomal subunit protein uS8 from Photorhabdus laumondii subsp. laumondii (strain DSM 15139 / CIP 105565 / TT01) (Photorhabdus luminescens subsp. laumondii).